The following is a 206-amino-acid chain: Macrophage immunometabolism regulator (206 aa).

M1 bears the N-acetylmethionine mark. The interval 1–41 (MEVDINGESRSTLTTLPFPGAEANSPGKAEAEKPRCSSTPC) is disordered. Residues S25, S140, and S167 each carry the phosphoserine modification.

It belongs to the UNC119-binding protein family. In terms of assembly, interacts with UNC119 and UNC119B; interaction preferentially takes place when UNC119 and UNC119B are unliganded with myristoylated proteins.

Its subcellular location is the cytoplasm. The protein localises to the cell projection. The protein resides in the cilium. In terms of biological role, regulates the macrophage function, by enhancing the resolution of inflammation and wound repair functions mediated by M2 macrophages. The regulation of macrophage function is, due at least in part, to its ability to inhibit glycolysis. May also play a role in trafficking of proteins via its interaction with UNC119 and UNC119B cargo adapters: may help the release of UNC119 and UNC119B cargo or the recycling of UNC119 and UNC119B. May play a role in ciliary membrane localization via its interaction with UNC119B and protein transport into photoreceptor cells. The sequence is that of Macrophage immunometabolism regulator (MACIR) from Pongo abelii (Sumatran orangutan).